The primary structure comprises 236 residues: 2,3,4,5-tetrahydropyridine-2,6-dicarboxylate N-acetyltransferase (236 aa).

This sequence belongs to the transferase hexapeptide repeat family. DapH subfamily.

It catalyses the reaction (S)-2,3,4,5-tetrahydrodipicolinate + acetyl-CoA + H2O = L-2-acetamido-6-oxoheptanedioate + CoA. It functions in the pathway amino-acid biosynthesis; L-lysine biosynthesis via DAP pathway; LL-2,6-diaminopimelate from (S)-tetrahydrodipicolinate (acetylase route): step 1/3. Functionally, catalyzes the transfer of an acetyl group from acetyl-CoA to tetrahydrodipicolinate. The polypeptide is 2,3,4,5-tetrahydropyridine-2,6-dicarboxylate N-acetyltransferase (Geobacillus sp. (strain WCH70)).